A 151-amino-acid chain; its full sequence is Transcriptional repressor NrdR (151 aa).

A zinc finger lies at 3–34 (CPFCSSDNTRVIDSRPADDNSSIRRRRLCDDC). An ATP-cone domain is found at 49 to 139 (LIVIKKDNNR…VYREFKDVNT (91 aa)).

It belongs to the NrdR family. Requires Zn(2+) as cofactor.

Negatively regulates transcription of bacterial ribonucleotide reductase nrd genes and operons by binding to NrdR-boxes. The sequence is that of Transcriptional repressor NrdR from Agathobacter rectalis (strain ATCC 33656 / DSM 3377 / JCM 17463 / KCTC 5835 / VPI 0990) (Eubacterium rectale).